Here is a 617-residue protein sequence, read N- to C-terminus: Protelomerase (617 aa).

The DNA site is built by Arg270, Lys295, Arg376, and His409. Tyr418 serves as the catalytic Nucleophile. Acidic residues predominate over residues 535–562 (DAEEDEIEEDFTDEEIDDTEFDVSDNAS). A disordered region spans residues 535–575 (DAEEDEIEEDFTDEEIDDTEFDVSDNASDEDKPEDKPRFAA). Residues 563–575 (DEDKPEDKPRFAA) show a composition bias toward basic and acidic residues.

This sequence belongs to the Caudoviricetes Protelomerase family. In terms of assembly, monomer. Homodimer; in presence of DNA.

In terms of biological role, converts the circular intermediates produced by the viral replication and carrying a joined telomere site to a linear DNA molecule with covalently closed hairpin ends. The viral circular DNA is cleaved at a palindromic site called telRL thereby generating a linear prophage plasmid with telomeres. Binds covalently to the 3'-phosphoryl of the cleaved strands. The protein is Protelomerase (tel) of Yersinia enterocolitica (Bacteriophage PY54).